Consider the following 192-residue polypeptide: Signal peptidase complex catalytic subunit SEC11C (192 aa).

At 1 to 28 (MVRAGAVGAHLPASGLDIFGDLKKMNKR) the chain is on the cytoplasmic side. The helical; Signal-anchor for type II membrane protein transmembrane segment at 29–48 (QLYYQVLNFAMIVSSALMIW) threads the bilayer. Over 49–192 (KGLIVLTGSE…GAYVLLKRES (144 aa)) the chain is Lumenal. Catalysis depends on charge relay system residues serine 68, histidine 108, and aspartate 134. The C-terminal short (CTS) helix stretch occupies residues 177-188 (ALLAVMGAYVLL).

It belongs to the peptidase S26B family. Component of the signal peptidase complex paralog C (SPC-C) composed of a catalytic subunit SEC11C and three accessory subunits SPCS1, SPCS2 and SPCS3. Within the complex, interacts with SPCS2 and SPCS3. The complex induces a local thinning of the ER membrane which is used to measure the length of the signal peptide (SP) h-region of protein substrates. This ensures the selectivity of the complex towards h-regions shorter than 18-20 amino acids. Post-translationally, may undergo processing at the N-terminus.

The protein resides in the endoplasmic reticulum membrane. The catalysed reaction is Cleavage of hydrophobic, N-terminal signal or leader sequences from secreted and periplasmic proteins.. Catalytic component of the signal peptidase complex (SPC) which catalyzes the cleavage of N-terminal signal sequences from nascent proteins as they are translocated into the lumen of the endoplasmic reticulum. Specifically cleaves N-terminal signal peptides that contain a hydrophobic alpha-helix (h-region) shorter than 18-20 amino acids. This is Signal peptidase complex catalytic subunit SEC11C (SEC11C) from Homo sapiens (Human).